Consider the following 665-residue polypeptide: Transketolase (665 aa).

Position 26 (His-26) interacts with substrate. Thiamine diphosphate-binding positions include His-66 and 114 to 116; that span reads GPL. The interval 94-114 is disordered; it reads NSKTPGHPETGETPGVETTTG. The span at 97-114 shows a compositional bias: low complexity; that stretch reads TPGHPETGETPGVETTTG. Asp-155 contacts Mg(2+). Residues Gly-156 and Asn-185 each coordinate thiamine diphosphate. The Mg(2+) site is built by Asn-185 and Ile-187. Residues His-261, Arg-358, and Ser-385 each contribute to the substrate site. A thiamine diphosphate-binding site is contributed by His-261. Catalysis depends on Glu-411, which acts as the Proton donor. Phe-437 is a thiamine diphosphate binding site. Substrate-binding residues include His-461, Asp-469, and Arg-520.

It belongs to the transketolase family. As to quaternary structure, homodimer. It depends on Mg(2+) as a cofactor. The cofactor is Ca(2+). Requires Mn(2+) as cofactor. Co(2+) is required as a cofactor. Thiamine diphosphate serves as cofactor.

The enzyme catalyses D-sedoheptulose 7-phosphate + D-glyceraldehyde 3-phosphate = aldehydo-D-ribose 5-phosphate + D-xylulose 5-phosphate. In terms of biological role, catalyzes the transfer of a two-carbon ketol group from a ketose donor to an aldose acceptor, via a covalent intermediate with the cofactor thiamine pyrophosphate. The sequence is that of Transketolase (tkt) from Buchnera aphidicola subsp. Acyrthosiphon pisum (strain APS) (Acyrthosiphon pisum symbiotic bacterium).